A 321-amino-acid chain; its full sequence is Lipoyl synthase (321 aa).

C68, C73, C79, C94, C98, C101, and S308 together coordinate [4Fe-4S] cluster. In terms of domain architecture, Radical SAM core spans 80–297 (FNHGTATFMI…KELAESIGFT (218 aa)).

It belongs to the radical SAM superfamily. Lipoyl synthase family. [4Fe-4S] cluster is required as a cofactor.

The protein localises to the cytoplasm. The enzyme catalyses [[Fe-S] cluster scaffold protein carrying a second [4Fe-4S](2+) cluster] + N(6)-octanoyl-L-lysyl-[protein] + 2 oxidized [2Fe-2S]-[ferredoxin] + 2 S-adenosyl-L-methionine + 4 H(+) = [[Fe-S] cluster scaffold protein] + N(6)-[(R)-dihydrolipoyl]-L-lysyl-[protein] + 4 Fe(3+) + 2 hydrogen sulfide + 2 5'-deoxyadenosine + 2 L-methionine + 2 reduced [2Fe-2S]-[ferredoxin]. The protein operates within protein modification; protein lipoylation via endogenous pathway; protein N(6)-(lipoyl)lysine from octanoyl-[acyl-carrier-protein]: step 2/2. Catalyzes the radical-mediated insertion of two sulfur atoms into the C-6 and C-8 positions of the octanoyl moiety bound to the lipoyl domains of lipoate-dependent enzymes, thereby converting the octanoylated domains into lipoylated derivatives. This chain is Lipoyl synthase, found in Shewanella pealeana (strain ATCC 700345 / ANG-SQ1).